The chain runs to 673 residues: Protein transport Sec1a (673 aa).

The segment at 538–591 (SSHKEESEARTGSVRKSSAPTAVPERKATPHSMRSRRTATWARPHSSDDGYSSD) is disordered.

The protein belongs to the STXBP/unc-18/SEC1 family. Does not bind the syntaxin KNOLLE.

In terms of biological role, involved in the vesicle trafficking. Binds syntaxins. This is Protein transport Sec1a (SEC1A) from Arabidopsis thaliana (Mouse-ear cress).